We begin with the raw amino-acid sequence, 1379 residues long: DNA-directed RNA polymerase subunit beta'' (1379 aa).

Residues cysteine 220, cysteine 293, cysteine 300, and cysteine 303 each contribute to the Zn(2+) site.

Belongs to the RNA polymerase beta' chain family. RpoC2 subfamily. In plastids the minimal PEP RNA polymerase catalytic core is composed of four subunits: alpha, beta, beta', and beta''. When a (nuclear-encoded) sigma factor is associated with the core the holoenzyme is formed, which can initiate transcription. It depends on Zn(2+) as a cofactor.

It localises to the plastid. The protein localises to the chloroplast. It carries out the reaction RNA(n) + a ribonucleoside 5'-triphosphate = RNA(n+1) + diphosphate. In terms of biological role, DNA-dependent RNA polymerase catalyzes the transcription of DNA into RNA using the four ribonucleoside triphosphates as substrates. In Capsella bursa-pastoris (Shepherd's purse), this protein is DNA-directed RNA polymerase subunit beta''.